The following is a 168-amino-acid chain: uncharacterized protein (168 aa).

Residues 1–29 constitute a mitochondrion transit peptide; it reads MGWRFPSPSPRQASPVAPLLAAPTAVRSC. Over residues 98-110 the composition is skewed to basic and acidic residues; that stretch reads GETKARRAREEGK. The disordered stretch occupies residues 98–152; that stretch reads GETKARRAREEGKLPSLGNAPAPRRRSVAWPAAEGSCAAPESSPPASEASLPAPE. Over residues 128–152 the composition is skewed to low complexity; sequence PAAEGSCAAPESSPPASEASLPAPE.

It localises to the mitochondrion. This is an uncharacterized protein from Homo sapiens (Human).